We begin with the raw amino-acid sequence, 147 residues long: Transthyretin (147 aa).

The signal sequence occupies residues 1–20 (MASFRLLLLCLAGLVFVSEA). Cysteine 30 is modified (sulfocysteine). Lysine 35 provides a ligand contact to L-thyroxine. A 4-carboxyglutamate modification is found at glutamate 62. Position 72 is a phosphoserine (serine 72). L-thyroxine is bound at residue glutamate 74. Residue asparagine 118 is glycosylated (N-linked (GlcNAc...) asparagine). An L-thyroxine-binding site is contributed by serine 137.

Belongs to the transthyretin family. In terms of assembly, homotetramer. Dimer of dimers. In the homotetramer, subunits assemble around a central channel that can accommodate two ligand molecules. Interacts with RBP4. In terms of processing, sulfonation of the reactive cysteine Cys-30 enhances the stability of the native conformation of TTR, avoiding misassembly of the protein leading to amyloid formation. In terms of tissue distribution, highly expressed in the choroid plexus.

The protein resides in the secreted. Thyroid hormone-binding protein. Probably transports thyroxine from the bloodstream to the brain. This is Transthyretin (TTR) from Ovis aries (Sheep).